Consider the following 287-residue polypeptide: PsbP domain-containing protein 1, chloroplastic (287 aa).

Belongs to the PsbP family. As to quaternary structure, partially associated with photosystem I (PSI) complex, but is not a subunit of the complex. Interacts with PsaA and PsaB, but not with PasF.

It is found in the plastid. The protein resides in the chloroplast thylakoid lumen. In terms of biological role, photosystem I assembly factor that assists the proper folding and integration of PsaB and PsaA into the thylakoid membrane. The polypeptide is PsbP domain-containing protein 1, chloroplastic (PPD1) (Arabidopsis thaliana (Mouse-ear cress)).